The primary structure comprises 45 residues: MSKRTFQPNNRRRAKKHGFRLRMRTRAGRAILAARRGKGRVELSA.

Belongs to the bacterial ribosomal protein bL34 family.

The polypeptide is Large ribosomal subunit protein bL34 (Paenarthrobacter aurescens (strain TC1)).